The primary structure comprises 796 residues: MDGIISNGSPGAPVTQPPPEPLERPPTPPPPPPEDSAAPPPPPDTSVPPPPPEDAPPAPPPEKKKKVGWGAKRPAATPLSVEELVRKKREADAAAAKPKFLSKAERERIALEKRAKEVEAGRRLKLDPFTDGTDRSGTQSPSVYPETPNGDERSIPTGPRAMRNSEVPTGPAAMRNKTYDMSPPPPPKAMSFSLTDGKGDSKRQAEEDEAAAQAALIKQKYMGTEKTSSFSAKKKRKRTTDRKFNFEWNAEEDTSGDYNPLYQQRHEANFYGRGRLAGFGDDVADTLAQKYARALEDRDREAGSIRAREILEMERRRREESTRNQLDKHWSEKKLEHMRERDWRIFKEDFNISTKGGSVPNPMRSWEESGLPKRLLELVDQVGYKEPTPIQRAAIPIALQSRDLIGVAVTGSGKTASFLLPLLVYISELPRIDEFEWRKNDGPYAIVLAPTRELAQQIEIEARKFTQPLGFNVVSIVGGHSFEEQAYSLRNGAEIIIATPGRLVDCIERRLLVLSQCCYVIMDEADRMIDLGFEEPVNKILDALPVTNEKPDTEEAENSAAMRSHRYRQTMMYTATMPSAVERIARKYLRRPAIVTIGSAGEAVDTVEQRVEMIAGEDKRKKRLADILSSGEFRPPIIVFVNIKRNCDAIAREIKQMGFSSVTLHGSKTQEQREAALASVRNGSTDVLVATDLAGRGIDVPDVSLVVNFNMANSIESYTHRIGRTGRAGKSGVAITFLGNEDADVMYDLKQMLMKSPISRVPEELRKHEAAQSKPNRGLAKKSDDSSGFGTKSGWQ.

2 disordered regions span residues Met1–Val81 and Lys113–Ala211. Pro residues predominate over residues Thr15 to Pro60. Residues Lys113–Asp134 are compositionally biased toward basic and acidic residues. A Q motif motif is present at residues Arg364–Arg392. The region spanning Ile395 to Val595 is the Helicase ATP-binding domain. Residue Ala408 to Thr415 coordinates ATP. The DEAD box motif lies at Asp523–Asp526. The Helicase C-terminal domain maps to Thr606 to Glu769. Residues Arg760–Gln796 form a disordered region. Positions Val761–Ala771 are enriched in basic and acidic residues. Residues Ser786–Gln796 are compositionally biased toward polar residues.

The protein belongs to the DEAD box helicase family. DDX23/PRP28 subfamily. As to quaternary structure, component of the U5 snRNP complex.

It localises to the cytoplasm. The protein localises to the nucleus. It carries out the reaction ATP + H2O = ADP + phosphate + H(+). Its function is as follows. ATP-dependent RNA helicase involved in mRNA splicing. May destabilize the U1/5'-splice site duplex to permit an effective competition for the 5'-splice site by the U6 snRNA, resulting in the switch between U1 and U6 at the 5'-splice site. May also act to unwind the U4/U6 base-pairing interaction in the U4/U6/U5 snRNP, facilitating the first covalent step of splicing. The chain is Pre-mRNA-splicing ATP-dependent RNA helicase prp28 (prp28) from Aspergillus fumigatus (strain ATCC MYA-4609 / CBS 101355 / FGSC A1100 / Af293) (Neosartorya fumigata).